A 337-amino-acid chain; its full sequence is DNA-directed RNA polymerase subunit alpha (337 aa).

Residues 1–226 (MLIAQRPTLT…ELFGLARELN (226 aa)) are alpha N-terminal domain (alpha-NTD). Residues 243–337 (LAADLALEIE…DTSFAEDEQL (95 aa)) are alpha C-terminal domain (alpha-CTD). Residues 315 to 337 (FDPSAVVNDFEDDDTSFAEDEQL) form a disordered region. Residues 323–337 (DFEDDDTSFAEDEQL) are compositionally biased toward acidic residues.

The protein belongs to the RNA polymerase alpha chain family. As to quaternary structure, homodimer. The RNAP catalytic core consists of 2 alpha, 1 beta, 1 beta' and 1 omega subunit. When a sigma factor is associated with the core the holoenzyme is formed, which can initiate transcription.

The enzyme catalyses RNA(n) + a ribonucleoside 5'-triphosphate = RNA(n+1) + diphosphate. Its function is as follows. DNA-dependent RNA polymerase catalyzes the transcription of DNA into RNA using the four ribonucleoside triphosphates as substrates. The chain is DNA-directed RNA polymerase subunit alpha from Kineococcus radiotolerans (strain ATCC BAA-149 / DSM 14245 / SRS30216).